A 362-amino-acid chain; its full sequence is GDSL esterase/lipase At5g45670 (362 aa).

A signal peptide spans 1–23; that stretch reads MARMSLMIMMIMVAVTMINIAKS. Ser36 functions as the Nucleophile in the catalytic mechanism. Catalysis depends on residues Asp326 and His329.

The protein belongs to the 'GDSL' lipolytic enzyme family.

The protein localises to the secreted. This chain is GDSL esterase/lipase At5g45670, found in Arabidopsis thaliana (Mouse-ear cress).